Consider the following 147-residue polypeptide: Large ribosomal subunit protein bL9 (147 aa).

The protein belongs to the bacterial ribosomal protein bL9 family.

Functionally, binds to the 23S rRNA. In Clostridium botulinum (strain Alaska E43 / Type E3), this protein is Large ribosomal subunit protein bL9.